The primary structure comprises 68 residues: Large ribosomal subunit protein uL29 (68 aa).

Belongs to the universal ribosomal protein uL29 family.

In Maricaulis maris (strain MCS10) (Caulobacter maris), this protein is Large ribosomal subunit protein uL29.